We begin with the raw amino-acid sequence, 349 residues long: 4-hydroxythreonine-4-phosphate dehydrogenase (349 aa).

Substrate-binding residues include His-141 and Thr-142. Positions 176, 221, and 276 each coordinate a divalent metal cation. Residues Lys-284, Asn-293, and Arg-302 each contribute to the substrate site.

It belongs to the PdxA family. As to quaternary structure, homodimer. Zn(2+) is required as a cofactor. Mg(2+) serves as cofactor. The cofactor is Co(2+).

The protein localises to the cytoplasm. The catalysed reaction is 4-(phosphooxy)-L-threonine + NAD(+) = 3-amino-2-oxopropyl phosphate + CO2 + NADH. It participates in cofactor biosynthesis; pyridoxine 5'-phosphate biosynthesis; pyridoxine 5'-phosphate from D-erythrose 4-phosphate: step 4/5. Functionally, catalyzes the NAD(P)-dependent oxidation of 4-(phosphooxy)-L-threonine (HTP) into 2-amino-3-oxo-4-(phosphooxy)butyric acid which spontaneously decarboxylates to form 3-amino-2-oxopropyl phosphate (AHAP). The chain is 4-hydroxythreonine-4-phosphate dehydrogenase from Methylorubrum extorquens (strain PA1) (Methylobacterium extorquens).